The chain runs to 136 residues: Membrane-bound negative regulator YvrL (136 aa).

Transmembrane regions (helical) follow at residues 18–38, 46–66, 83–103, and 106–126; these read LLAAAAVVLTYFAVIYILFSL, AAHVLLFAVVFLVLGLCFEPF, LFILLAGIVQLLFLWMTAHTT, and LISDIWLSTTEEMIVAAVFLI.

The protein localises to the cell membrane. Negatively regulates RNA polymerase sigma factor SigO-dependent transcription. Prevents the expression or secretion of OxdC under nonstress conditions. May act as an anti-sigma factor. The sequence is that of Membrane-bound negative regulator YvrL (yvrL) from Bacillus subtilis (strain 168).